The primary structure comprises 142 residues: E1B protein, small T-antigen (142 aa).

It belongs to the adenoviridae E1B 19 kDa protein family.

The protein localises to the host cell membrane. The protein resides in the host nucleus envelope. Its subcellular location is the host nucleus lamina. Functionally, putative adenovirus Bcl-2 homolog that inhibits apoptosis induced by TNF or FAS pathways, as well as p53-mediated apoptosis. Without E1B 19K function, virus production is compromised because of premature death of host cell. Interacts with Bax protein in cell lysates. The polypeptide is E1B protein, small T-antigen (Homo sapiens (Human)).